The chain runs to 113 residues: Large ribosomal subunit protein bL17 (113 aa).

Belongs to the bacterial ribosomal protein bL17 family. As to quaternary structure, part of the 50S ribosomal subunit. Contacts protein L32.

This Clostridium novyi (strain NT) protein is Large ribosomal subunit protein bL17.